The primary structure comprises 628 residues: Chaperone protein HtpG (628 aa).

An a; substrate-binding region spans residues 1-334; the sequence is MTTTDTASET…SEDLPLNLSR (334 aa). Positions 335–550 are b; it reads EMLQNNPQLA…GFGPDRELEK (216 aa). Residues 551 to 628 are c; the sequence is MLARANKGAA…LVLRGLVAHG (78 aa).

This sequence belongs to the heat shock protein 90 family. In terms of assembly, homodimer.

Its subcellular location is the cytoplasm. Its function is as follows. Molecular chaperone. Has ATPase activity. The chain is Chaperone protein HtpG from Rhodopseudomonas palustris (strain BisB5).